A 453-amino-acid chain; its full sequence is GTPase Der (453 aa).

EngA-type G domains follow at residues 3–178 and 190–363; these read PKIA…PNNE and LKLA…LECS. GTP-binding positions include 9–16, 57–61, 130–133, 196–203, 243–247, and 308–311; these read GRPNVGKS, DTGGV, NKVD, GRPNAGKS, DTAGI, and NKTD. Positions 364–448 constitute a KH-like domain; that stretch reads TRINTGVLNR…PIRIRLRSSH (85 aa).

This sequence belongs to the TRAFAC class TrmE-Era-EngA-EngB-Septin-like GTPase superfamily. EngA (Der) GTPase family. In terms of assembly, associates with the 50S ribosomal subunit.

Functionally, GTPase that plays an essential role in the late steps of ribosome biogenesis. The polypeptide is GTPase Der (Lawsonia intracellularis (strain PHE/MN1-00)).